We begin with the raw amino-acid sequence, 771 residues long: MDDFERRRELRRQKREEMRLEAERLSYQRNDDDEEEAARERRRRARQERLRQKEEGDVSGEVTEKSEVNAQNSVAEEETKRSTDDEAALLERLARREERRQKRLQEALERQKEFDPTITDGSLSVPSRREVNNVEENEITGKEEKVETRQGRCEIEETETVTKSYQRNNWRQDGEEEGKKEEKDSEEEKPKEVPTEENQVDVAVEKSTDKEEVVETKTLAVNAENDTNAMLEGEQSITDAADKEKEEAEKEREKLEAEEKERLKAEEEKKAAEEKQKAEEEKKAAEERERAKAEEEKRAAEERERAKAEEERKAAEERERAKAEEERKAAEERAKAEEERKAAEERAKAEEERKAAEERAKAEKERKAAEERERAKAEEEKRAAEEKARLEAEKLKEKKKMEEKKAQEEKAQANLLRKQEEDKEAKVEAKKESLPEKLQPTSKKDQVKDNKDKEKAPKEEMKSVWDRKRGVPEQKAQNGERELTTPKLKSTENAFGRSNLKGAANAEAGSEKLKEKQQEAAVELDELKKRREERRKILEEEEQKKKQEEAERKIREEEEKKRMKEEIERRRAEAAEKRQKVPEDGVSEEKKPFKCFSPKGSSLKIEERAEFLNKSAQKSGMKPAHTTAVVSKIDSRLEQYTSAVVGNKAAKPAKPAASDLPVPAEGVRNIKSMWEKGNVFSSPGGTGTPNKETAGLKVGVSSRINEWLTKTPEGNKSPAPKPSDLRPGDVSGKRNLWEKQSVEKPAASSSKVTATGKKSETNGLRQFEKEP.

Disordered regions lie at residues Glu-23–Glu-91 and Leu-104–Lys-599. Positions Ser-26–Gln-199 are myosin and calmodulin-binding. Phosphotyrosine is present on Tyr-27. Basic and acidic residues-rich tracts occupy residues Gln-47–Glu-67, Leu-104–Asp-115, Ile-139–Ile-155, Trp-170–Pro-194, Ala-203–Glu-215, Ala-240–Pro-435, Ser-442–Thr-484, Gly-509–Gln-518, and Asp-525–Pro-592. Repeat copies occupy residues Glu-251 to Ala-265, Glu-266 to Ala-278, Glu-279 to Ala-291, Glu-294 to Ala-306, Glu-309 to Ala-321, Glu-324 to Ala-336, Glu-337 to Ala-349, Glu-350 to Ala-362, Glu-363 to Ala-375, and Glu-378 to Leu-390. Residues Glu-251–Leu-390 form a 10 X 13 AA approximate tandem repeats region. Positions Glu-523–Lys-580 are tropomyosin-binding. A Phosphoserine; by CDK1 modification is found at Ser-597. Residues Leu-612–Val-644 are strong actin-binding. The interval Lys-622 to Lys-632 is tropomyosin-binding. Tyr-640 carries the phosphotyrosine modification. The calmodulin-binding stretch occupies residues Trp-674–Phe-680. A disordered region spans residues Lys-676 to Pro-771. Residues Val-679–Lys-691 are compositionally biased toward polar residues. Ser-682 is subject to Phosphoserine; by CDK1. Thr-688 and Thr-711 each carry phosphothreonine; by CDK1. A Phosphoserine; by CDK1 modification is found at Ser-717. Residues Ser-723–Val-742 are compositionally biased toward basic and acidic residues. Positions Arg-726–Val-752 are weak actin-binding.

The protein belongs to the caldesmon family. Post-translationally, phosphorylated in non-muscle cells. Phosphorylation by CDK1 during mitosis causes caldesmon to dissociate from microfilaments. Phosphorylation reduces caldesmon binding to actin, myosin, and calmodulin as well as its inhibition of actomyosin ATPase activity. Phosphorylation also occurs in both quiescent and dividing smooth muscle cells with similar effects on the interaction with actin and calmodulin and on microfilaments reorganization. In terms of tissue distribution, high-molecular-weight caldesmon (h-caldesmon) is predominantly expressed in smooth muscles, whereas low-molecular-weight caldesmon (l-caldesmon) is widely distributed in non-muscle tissues and cells. Not expressed in skeletal muscle or heart.

The protein resides in the cytoplasm. The protein localises to the cytoskeleton. It localises to the myofibril. Its subcellular location is the stress fiber. Actin- and myosin-binding protein implicated in the regulation of actomyosin interactions in smooth muscle and nonmuscle cells (could act as a bridge between myosin and actin filaments). Stimulates actin binding of tropomyosin which increases the stabilization of actin filament structure. In muscle tissues, inhibits the actomyosin ATPase by binding to F-actin. This inhibition is attenuated by calcium-calmodulin and is potentiated by tropomyosin. Interacts with actin, myosin, two molecules of tropomyosin and with calmodulin. Also plays an essential role during cellular mitosis and receptor capping. The chain is Caldesmon (CALD1) from Gallus gallus (Chicken).